The sequence spans 330 residues: Aspartate--ammonia ligase (330 aa).

This sequence belongs to the class-II aminoacyl-tRNA synthetase family. AsnA subfamily.

The protein resides in the cytoplasm. The catalysed reaction is L-aspartate + NH4(+) + ATP = L-asparagine + AMP + diphosphate + H(+). It participates in amino-acid biosynthesis; L-asparagine biosynthesis; L-asparagine from L-aspartate (ammonia route): step 1/1. The chain is Aspartate--ammonia ligase from Edwardsiella ictaluri (strain 93-146).